Consider the following 65-residue polypeptide: uncharacterized protein (65 aa).

The segment at 24–65 (NNNNNNNNNNNNNNNNNNNNNNNNNNNNNNNKNNKNNNKNND) is disordered.

This is an uncharacterized protein from Dictyostelium discoideum (Social amoeba).